Reading from the N-terminus, the 141-residue chain is Hemoglobin subunit alpha (141 aa).

In terms of domain architecture, Globin spans 1–141 (VLSPADKTNV…VSTVLTSKYR (141 aa)). Ser3 bears the Phosphoserine mark. Lys7 bears the N6-succinyllysine mark. Thr8 is modified (phosphothreonine). Lys11 carries the N6-succinyllysine modification. An N6-acetyllysine; alternate modification is found at Lys16. Position 16 is an N6-succinyllysine; alternate (Lys16). Tyr24 carries the post-translational modification Phosphotyrosine. Ser35 bears the Phosphoserine mark. N6-succinyllysine is present on Lys40. Position 49 is a phosphoserine (Ser49). His58 contributes to the O2 binding site. His87 is a heme b binding site. Ser102 carries the phosphoserine modification. Thr108 is subject to Phosphothreonine. Phosphoserine occurs at positions 124 and 131. A phosphothreonine mark is found at Thr134 and Thr137. Ser138 is subject to Phosphoserine.

Belongs to the globin family. Heterotetramer of two alpha chains and two beta chains. Red blood cells.

Its function is as follows. Involved in oxygen transport from the lung to the various peripheral tissues. Functionally, hemopressin acts as an antagonist peptide of the cannabinoid receptor CNR1. Hemopressin-binding efficiently blocks cannabinoid receptor CNR1 and subsequent signaling. This Taphozous georgianus (Sharp-nosed tomb bat) protein is Hemoglobin subunit alpha (HBA).